The primary structure comprises 312 residues: DnaJ homolog subfamily B member 7 (312 aa).

The region spanning 3 to 69 (DYYEVLGVQR…EKRDIYDKYG (67 aa)) is the J domain. Residues 272-312 (SWVTNKKEPSIFSAGFKEGGRRKKKKHKEGQKKKKSNKRNH) form a disordered region. Over residues 291 to 312 (GRRKKKKHKEGQKKKKSNKRNH) the composition is skewed to basic residues.

In terms of biological role, probably acts as a co-chaperone. In Mus musculus (Mouse), this protein is DnaJ homolog subfamily B member 7 (Dnajb7).